The primary structure comprises 702 residues: ATP-dependent RNA helicase DDX4 (702 aa).

Residues 22–228 (FEKDKYSSGA…YIPPPPPEDE (207 aa)) form a disordered region. Over residues 29–46 (SGANGDTFNRTSASSDIG) the composition is skewed to polar residues. Gly residues-rich tracts occupy residues 58–68 (GGFGRGKGFGN) and 125–137 (RGSF…GFGL). 2 stretches are compositionally biased toward polar residues: residues 141–150 (NSESDQDQGT) and 195–215 (SGKN…SQGP). Phosphoserine occurs at positions 195 and 199. The tract at residues 201–220 (KSETEGGESSDSQGPKVTYI) is interaction with RANBP9. The short motif at 261–289 (LTFEEANLCQTLNNNIAKAGYTKLTPVQK) is the Q motif element. A Helicase ATP-binding domain is found at 292-475 (IPIVLAGRDL…GDFLKSSYLF (184 aa)). 305-312 (AQTGSGKT) contributes to the ATP binding site. A DEAD box motif is present at residues 419–422 (DEAD). The region spanning 503–648 (KLVEILRNIG…DVPAWLEEIA (146 aa)) is the Helicase C-terminal domain. Polar residues predominate over residues 681–693 (TLNTAGISSSQAP). The disordered stretch occupies residues 681–702 (TLNTAGISSSQAPNPVDDESWD). Ser-700 bears the Phosphoserine mark.

Belongs to the DEAD box helicase family. DDX4/VASA subfamily. Found in a mRNP complex, at least composed of TDRD1, TDRD6, TDRD7 and DDX4. Interacts with RANBP9. Interacts with RANBP10. Interacts with PIWIL2 and MAEL. Interacts with BMAL1 and CLOCK. Interacts with Tex19.1 and, probably, Tex19.2. Interacts with RBM46. In terms of tissue distribution, testis-specific.

The protein resides in the cytoplasm. The protein localises to the perinuclear region. The enzyme catalyses ATP + H2O = ADP + phosphate + H(+). In terms of biological role, ATP-dependent RNA helicase required during spermatogenesis to repress transposable elements and preventing their mobilization, which is essential for the germline integrity. Acts via the piRNA metabolic process, which mediates the repression of transposable elements during meiosis by forming complexes composed of piRNAs and Piwi proteins and governs the methylation and subsequent repression of transposons. Involved in the secondary piRNAs metabolic process, the production of piRNAs in fetal male germ cells through a ping-pong amplification cycle. Required for PIWIL2 slicing-triggered piRNA biogenesis: helicase activity enables utilization of one of the slice cleavage fragments generated by PIWIL2 and processing these pre-piRNAs into piRNAs. This is ATP-dependent RNA helicase DDX4 from Mus musculus (Mouse).